The following is a 278-amino-acid chain: Large ribosomal subunit protein uL2 (278 aa).

Disordered stretches follow at residues 29-53 and 223-278; these read PEKS…TTRH and GVAM…GKKR. Basic and acidic residues predominate over residues 255-268; it reads GRTRRPGKESDKLI. Residues 269–278 show a composition bias toward basic residues; that stretch reads VRRRRTGKKR.

It belongs to the universal ribosomal protein uL2 family. Part of the 50S ribosomal subunit. Forms a bridge to the 30S subunit in the 70S ribosome.

Its function is as follows. One of the primary rRNA binding proteins. Required for association of the 30S and 50S subunits to form the 70S ribosome, for tRNA binding and peptide bond formation. It has been suggested to have peptidyltransferase activity; this is somewhat controversial. Makes several contacts with the 16S rRNA in the 70S ribosome. The protein is Large ribosomal subunit protein uL2 of Kineococcus radiotolerans (strain ATCC BAA-149 / DSM 14245 / SRS30216).